The following is a 161-amino-acid chain: Cyclic pyranopterin monophosphate synthase (161 aa).

Substrate contacts are provided by residues 75-77 (MCH) and 115-116 (ME). Asp-130 is an active-site residue.

The protein belongs to the MoaC family. As to quaternary structure, homohexamer; trimer of dimers.

It carries out the reaction (8S)-3',8-cyclo-7,8-dihydroguanosine 5'-triphosphate = cyclic pyranopterin phosphate + diphosphate. It functions in the pathway cofactor biosynthesis; molybdopterin biosynthesis. In terms of biological role, catalyzes the conversion of (8S)-3',8-cyclo-7,8-dihydroguanosine 5'-triphosphate to cyclic pyranopterin monophosphate (cPMP). The chain is Cyclic pyranopterin monophosphate synthase from Bacillus mycoides (strain KBAB4) (Bacillus weihenstephanensis).